The chain runs to 257 residues: Protein vip1 (257 aa).

In terms of domain architecture, RRM spans 3-76; that stretch reads NQVIVTNISP…NKIQITSEDG (74 aa). Positions 74–99 are disordered; sequence EDGGAASTTDQGGAGGDQAARQEDKP. Low complexity predominate over residues 75-84; sequence DGGAASTTDQ. 2 positions are modified to phosphoserine: Ser132 and Ser177. The segment at 217-257 is disordered; that stretch reads ARRLADAKNQAEGTASPASSTPTAPAEKEPTAPTTESKTTE. Thr230 carries the phosphothreonine modification. Positions 230–257 are enriched in low complexity; it reads TASPASSTPTAPAEKEPTAPTTESKTTE. 2 positions are modified to phosphoserine: Ser232 and Ser235.

The chain is Protein vip1 (vip1) from Schizosaccharomyces pombe (strain 972 / ATCC 24843) (Fission yeast).